A 177-amino-acid chain; its full sequence is Small ribosomal subunit protein uS5 (177 aa).

The S5 DRBM domain maps to 14–77 (LQEKLITVNR…EKARHNMIDI (64 aa)).

This sequence belongs to the universal ribosomal protein uS5 family. As to quaternary structure, part of the 30S ribosomal subunit. Contacts proteins S4 and S8.

Its function is as follows. With S4 and S12 plays an important role in translational accuracy. Located at the back of the 30S subunit body where it stabilizes the conformation of the head with respect to the body. The sequence is that of Small ribosomal subunit protein uS5 from Blochmanniella floridana.